A 194-amino-acid chain; its full sequence is Dephospho-CoA kinase (194 aa).

One can recognise a DPCK domain in the interval 3–194; the sequence is IVGLTGSIGM…RAIVDDLRAG (192 aa). Residue 11–16 participates in ATP binding; sequence GMGKST.

The protein belongs to the CoaE family.

It localises to the cytoplasm. The catalysed reaction is 3'-dephospho-CoA + ATP = ADP + CoA + H(+). It participates in cofactor biosynthesis; coenzyme A biosynthesis; CoA from (R)-pantothenate: step 5/5. Catalyzes the phosphorylation of the 3'-hydroxyl group of dephosphocoenzyme A to form coenzyme A. This Rhizobium meliloti (strain 1021) (Ensifer meliloti) protein is Dephospho-CoA kinase.